The sequence spans 293 residues: Shikimate dehydrogenase (NADP(+)) (293 aa).

Shikimate is bound by residues 20–22 and threonine 72; that span reads SLT. Residue lysine 76 is the Proton acceptor of the active site. Shikimate-binding residues include asparagine 97 and aspartate 112. Residues 136–140 and isoleucine 230 each bind NADP(+); that span reads GAGGA. Position 232 (tyrosine 232) interacts with shikimate. Position 253 (glycine 253) interacts with NADP(+).

The protein belongs to the shikimate dehydrogenase family. As to quaternary structure, homodimer.

It catalyses the reaction shikimate + NADP(+) = 3-dehydroshikimate + NADPH + H(+). It functions in the pathway metabolic intermediate biosynthesis; chorismate biosynthesis; chorismate from D-erythrose 4-phosphate and phosphoenolpyruvate: step 4/7. Its function is as follows. Involved in the biosynthesis of the chorismate, which leads to the biosynthesis of aromatic amino acids. Catalyzes the reversible NADPH linked reduction of 3-dehydroshikimate (DHSA) to yield shikimate (SA). The protein is Shikimate dehydrogenase (NADP(+)) of Pseudarthrobacter chlorophenolicus (strain ATCC 700700 / DSM 12829 / CIP 107037 / JCM 12360 / KCTC 9906 / NCIMB 13794 / A6) (Arthrobacter chlorophenolicus).